Here is a 326-residue protein sequence, read N- to C-terminus: HTH-type transcriptional regulator BlaA (326 aa).

Positions 1–59 (MDVVNACRAFVKVSERGSFTVGAAAAQMSQSVASRRVAALEKHFGERLFDRASRRPSLT) constitute an HTH lysR-type domain. The segment at residues 19–38 (FTVGAAAAQMSQSVASRRVA) is a DNA-binding region (H-T-H motif). Residues 289–326 (TADHGPDPATGAGPGADAGTEPGARAEPGAPEEGAQAC) form a disordered region. Residues 295–326 (DPATGAGPGADAGTEPGARAEPGAPEEGAQAC) are compositionally biased toward low complexity.

This sequence belongs to the LysR transcriptional regulatory family.

Positive regulator of the expression of the gene (blaB) for beta-lactamase. It binds to the blaL-blaA intercistronic region. This Streptomyces cacaoi protein is HTH-type transcriptional regulator BlaA (blaA).